Reading from the N-terminus, the 329-residue chain is Flotillin-like protein FloA (329 aa).

2 helical membrane-spanning segments follow: residues 4–24 and 27–47; these read FIPF…ILSF and VGLW…TLVG.

It belongs to the flotillin-like FloA family. Homooligomerizes.

The protein resides in the cell membrane. Its subcellular location is the membrane raft. In terms of biological role, found in functional membrane microdomains (FMM) that may be equivalent to eukaryotic membrane rafts. FMMs are highly dynamic and increase in number as cells age. Flotillins are thought to be important factors in membrane fluidity. The chain is Flotillin-like protein FloA from Alkaliphilus metalliredigens (strain QYMF).